Consider the following 381-residue polypeptide: DnaJ-related protein spj1 (381 aa).

The 70-residue stretch at 5–74 (NFSQKQILGV…RKIYDAYGEE (70 aa)) folds into the J domain. The segment at 72–93 (GEEGLNGQPGGPGGGPGEGFPG) is disordered. Over residues 78 to 93 (GQPGGPGGGPGEGFPG) the composition is skewed to gly residues. A CR-type zinc finger spans residues 138 to 225 (GGSFTLEIPV…CKGERVAEVV (88 aa)). 4 CXXCXGXG motif repeats span residues 151-158 (CSVCSGQG), 172-179 (CPVCGGSG), 199-206 (CNACNGNG), and 213-220 (CPRCKGER). Positions 378-381 (FDEL) match the Prevents secretion from ER motif.

It localises to the endoplasmic reticulum. The sequence is that of DnaJ-related protein spj1 (spj1) from Schizosaccharomyces pombe (strain 972 / ATCC 24843) (Fission yeast).